A 295-amino-acid polypeptide reads, in one-letter code: Diaminopimelate epimerase (295 aa).

Asn13, Gln46, and Asn66 together coordinate substrate. The Proton donor role is filled by Cys75. Substrate contacts are provided by residues 76–77 (GN), Asn162, Asn195, and 213–214 (ER). The active-site Proton acceptor is Cys222. 223–224 (GT) lines the substrate pocket.

Belongs to the diaminopimelate epimerase family. Homodimer.

It is found in the cytoplasm. The enzyme catalyses (2S,6S)-2,6-diaminopimelate = meso-2,6-diaminopimelate. It participates in amino-acid biosynthesis; L-lysine biosynthesis via DAP pathway; DL-2,6-diaminopimelate from LL-2,6-diaminopimelate: step 1/1. Catalyzes the stereoinversion of LL-2,6-diaminopimelate (L,L-DAP) to meso-diaminopimelate (meso-DAP), a precursor of L-lysine and an essential component of the bacterial peptidoglycan. The polypeptide is Diaminopimelate epimerase (Psychrobacter cryohalolentis (strain ATCC BAA-1226 / DSM 17306 / VKM B-2378 / K5)).